Consider the following 1041-residue polypeptide: Protein EGT2 (1041 aa).

The signal sequence occupies residues 1 to 20; sequence MNKLLLHLVRVISILGLANA. N-linked (GlcNAc...) asparagine glycans are attached at residues Asn-65, Asn-103, Asn-161, Asn-175, Asn-249, Asn-332, Asn-401, Asn-435, Asn-465, Asn-485, Asn-506, Asn-526, Asn-544, and Asn-556. Positions 388 to 410 are disordered; that stretch reads SSSSISLSAPSSSNSTFTTPSSS. The stretch at 457 to 492 is repeat 1; that stretch reads SSTLSYTSNVTISVSSATQHTTTPSYVSNSTTLSSS. Positions 457–962 are 9 X approximate repeats; that stretch reads SSTLSYTSNV…TLKTSTFQKA (506 aa). Tandem repeats lie at residues 577–606 and 613–647. Asn-635, Asn-636, Asn-657, and Asn-709 each carry an N-linked (GlcNAc...) asparagine glycan. Repeat 4 spans residues 716–745; the sequence is TDKSDTYSVISSTESAQVTEYDSLLPISTL. N-linked (GlcNAc...) asparagine glycosylation is present at Asn-756. Tandem repeats lie at residues 773 to 802, 811 to 840, 849 to 886, 887 to 924, and 925 to 962. Gly-1020 carries GPI-anchor amidated glycine lipidation. Positions 1021-1041 are cleaved as a propeptide — removed in mature form; that stretch reads AAGQLTIRIGSLLLGLISFLL.

Post-translationally, the GPI-anchor is attached to the protein in the endoplasmic reticulum and serves to target the protein to the cell surface. There, the glucosamine-inositol phospholipid moiety is cleaved off and the GPI-modified mannoprotein is covalently attached via its lipidless GPI glycan remnant to the 1,6-beta-glucan of the outer cell wall layer.

Its subcellular location is the secreted. It is found in the cell wall. The protein resides in the membrane. Functionally, seems to be involved in the correct timing of cell separation after cytokinesis, as separation of mutant daughter cells is delayed. Could either be an enzyme necessary for glucans-degradation of the cell wall at the neck region between mother and daughter cells or a regulatory protein controlling this metabolic step. This chain is Protein EGT2 (EGT2), found in Saccharomyces cerevisiae (strain ATCC 204508 / S288c) (Baker's yeast).